A 256-amino-acid polypeptide reads, in one-letter code: Pimeloyl-[acyl-carrier protein] methyl ester esterase (256 aa).

In terms of domain architecture, AB hydrolase-1 spans 15 to 242 (HLVLLHGWGL…AAHAPFISHP (228 aa)). Substrate is bound by residues W22, 82–83 (SL), and 143–147 (FLALQ). S82 functions as the Nucleophile in the catalytic mechanism. Catalysis depends on residues D207 and H235. H235 provides a ligand contact to substrate.

The protein belongs to the AB hydrolase superfamily. Carboxylesterase BioH family. Monomer.

The protein localises to the cytoplasm. The catalysed reaction is 6-carboxyhexanoyl-[ACP] methyl ester + H2O = 6-carboxyhexanoyl-[ACP] + methanol + H(+). The protein operates within cofactor biosynthesis; biotin biosynthesis. Functionally, the physiological role of BioH is to remove the methyl group introduced by BioC when the pimeloyl moiety is complete. It allows to synthesize pimeloyl-ACP via the fatty acid synthetic pathway through the hydrolysis of the ester bonds of pimeloyl-ACP esters. This is Pimeloyl-[acyl-carrier protein] methyl ester esterase from Salmonella agona (strain SL483).